The following is a 335-amino-acid chain: Peroxidase 2 (335 aa).

A signal peptide spans 1–29; that stretch reads MAAATAPKTMPSSVFAAALLLLAAAACQA. 4 cysteine pairs are disulfide-bonded: Cys-44–Cys-125, Cys-77–Cys-82, Cys-131–Cys-329, and Cys-212–Cys-238. Residue His-75 is the Proton acceptor of the active site. 5 residues coordinate Ca(2+): Asp-76, Val-79, Gly-81, Asp-83, and Ser-85. Asn-166 and Asn-180 each carry an N-linked (GlcNAc...) asparagine glycan. His-205 provides a ligand contact to heme b. Residue Thr-206 participates in Ca(2+) binding. Residue Asn-241 is glycosylated (N-linked (GlcNAc...) asparagine). Residues Asp-253, Thr-256, and Asp-261 each coordinate Ca(2+).

This sequence belongs to the peroxidase family. Classical plant (class III) peroxidase subfamily. The cofactor is heme b. Ca(2+) is required as a cofactor. In terms of tissue distribution, expressed in the elongating region of young roots, and in root vascular tissues and epidermis.

Its subcellular location is the secreted. It carries out the reaction 2 a phenolic donor + H2O2 = 2 a phenolic radical donor + 2 H2O. Functionally, removal of H(2)O(2), oxidation of toxic reductants, biosynthesis and degradation of lignin, suberization, auxin catabolism, response to environmental stresses such as wounding, pathogen attack and oxidative stress. These functions might be dependent on each isozyme/isoform in each plant tissue. The chain is Peroxidase 2 (PER2) from Zea mays (Maize).